A 438-amino-acid polypeptide reads, in one-letter code: V-type ATP synthase beta chain (438 aa).

This sequence belongs to the ATPase alpha/beta chains family.

Produces ATP from ADP in the presence of a proton gradient across the membrane. The V-type beta chain is a regulatory subunit. In Chlamydia trachomatis serovar A (strain ATCC VR-571B / DSM 19440 / HAR-13), this protein is V-type ATP synthase beta chain.